The primary structure comprises 389 residues: Aspartic protease pepA (389 aa).

The N-terminal stretch at 1–20 (MVLINQLGAVLAVCATLTVA) is a signal peptide. The propeptide at 21–67 (APTKGKARFNVPQVAIPKKMVHHPAVSYARALHKFGMKVPKTVQDAA) is activation peptide. A Peptidase A1 domain is found at 82–386 (YVTQVTVGEG…DTQGPRIGFA (305 aa)). Asp-98 is an active-site residue. A glycan (N-linked (GlcNAc...) asparagine) is linked at Asn-257. Asp-279 is a catalytic residue. A disulfide bridge connects residues Cys-315 and Cys-348.

This sequence belongs to the peptidase A1 family. In terms of assembly, monomer.

The protein localises to the secreted. Its function is as follows. Secreted aspartic endopeptidase that allows assimilation of proteinaceous substrates. The scissile peptide bond is attacked by a nucleophilic water molecule activated by two aspartic residues in the active site. Shows a broad primary substrate specificity. Favors hydrophobic residues at the P1 and P1' positions. This Arthroderma otae (strain ATCC MYA-4605 / CBS 113480) (Microsporum canis) protein is Aspartic protease pepA.